A 360-amino-acid chain; its full sequence is Peptide chain release factor 1 (360 aa).

At Gln234 the chain carries N5-methylglutamine.

This sequence belongs to the prokaryotic/mitochondrial release factor family. In terms of processing, methylated by PrmC. Methylation increases the termination efficiency of RF1.

The protein resides in the cytoplasm. In terms of biological role, peptide chain release factor 1 directs the termination of translation in response to the peptide chain termination codons UAG and UAA. In Clostridium botulinum (strain Alaska E43 / Type E3), this protein is Peptide chain release factor 1.